Reading from the N-terminus, the 374-residue chain is Pectate lyase 1 (374 aa).

The first 22 residues, 1–22 (MKYLLPSAAAGLLLLAAQPTMA), serve as a signal peptide directing secretion. The cysteines at positions 93 and 176 are disulfide-linked. 4 residues coordinate Ca(2+): Asp-150, Asp-152, Glu-187, and Asp-191. The active site involves Arg-239. Cys-350 and Cys-373 are joined by a disulfide.

The protein belongs to the polysaccharide lyase 1 family. PLADES subfamily. The cofactor is Ca(2+).

It localises to the secreted. It catalyses the reaction Eliminative cleavage of (1-&gt;4)-alpha-D-galacturonan to give oligosaccharides with 4-deoxy-alpha-D-galact-4-enuronosyl groups at their non-reducing ends.. It functions in the pathway glycan metabolism; pectin degradation; 2-dehydro-3-deoxy-D-gluconate from pectin: step 2/5. Its function is as follows. Involved in maceration and soft-rotting of plant tissue. The sequence is that of Pectate lyase 1 (pel1) from Pectobacterium atrosepticum (strain SCRI 1043 / ATCC BAA-672) (Erwinia carotovora subsp. atroseptica).